A 347-amino-acid chain; its full sequence is Fructose-1,6-bisphosphatase class 1 2 (347 aa).

Glu-92, Asp-111, Leu-113, and Asp-114 together coordinate Mg(2+). Substrate contacts are provided by residues 114-117 (DGSS) and Asn-202. Residue Glu-274 participates in Mg(2+) binding.

The protein belongs to the FBPase class 1 family. In terms of assembly, homotetramer. Mg(2+) is required as a cofactor.

It localises to the cytoplasm. It catalyses the reaction beta-D-fructose 1,6-bisphosphate + H2O = beta-D-fructose 6-phosphate + phosphate. It functions in the pathway carbohydrate biosynthesis; Calvin cycle. The chain is Fructose-1,6-bisphosphatase class 1 2 from Bradyrhizobium sp. (strain BTAi1 / ATCC BAA-1182).